A 332-amino-acid polypeptide reads, in one-letter code: L-lactate dehydrogenase A chain (332 aa).

Residues 29–57 (GMVGMASAISILLKDLCDELAMVDVMEDK) and R99 each bind NAD(+). Substrate is bound by residues R106, N138, and R169. N138 is a binding site for NAD(+). H193 functions as the Proton acceptor in the catalytic mechanism. Residue T248 participates in substrate binding.

It belongs to the LDH/MDH superfamily. LDH family. In terms of assembly, homotetramer.

It is found in the cytoplasm. It carries out the reaction (S)-lactate + NAD(+) = pyruvate + NADH + H(+). It participates in fermentation; pyruvate fermentation to lactate; (S)-lactate from pyruvate: step 1/1. Functionally, interconverts simultaneously and stereospecifically pyruvate and lactate with concomitant interconversion of NADH and NAD(+). The sequence is that of L-lactate dehydrogenase A chain (ldha) from Eleginops maclovinus (Patagonian blennie).